We begin with the raw amino-acid sequence, 382 residues long: Histidinol-phosphate aminotransferase (382 aa).

At Lys-215 the chain carries N6-(pyridoxal phosphate)lysine. The interval 360 to 382 (NSNNIDNQSKTHSQTSSIRKGTI) is disordered.

It belongs to the class-II pyridoxal-phosphate-dependent aminotransferase family. Histidinol-phosphate aminotransferase subfamily. Homodimer. The cofactor is pyridoxal 5'-phosphate.

The catalysed reaction is L-histidinol phosphate + 2-oxoglutarate = 3-(imidazol-4-yl)-2-oxopropyl phosphate + L-glutamate. It participates in amino-acid biosynthesis; L-histidine biosynthesis; L-histidine from 5-phospho-alpha-D-ribose 1-diphosphate: step 7/9. The protein is Histidinol-phosphate aminotransferase of Yersinia pseudotuberculosis serotype IB (strain PB1/+).